The following is a 222-amino-acid chain: UPF0173 metal-dependent hydrolase Kcr_0055 (222 aa).

This sequence belongs to the UPF0173 family.

This is UPF0173 metal-dependent hydrolase Kcr_0055 from Korarchaeum cryptofilum (strain OPF8).